A 356-amino-acid polypeptide reads, in one-letter code: tRNA N6-adenosine threonylcarbamoyltransferase (356 aa).

Fe cation-binding residues include histidine 115 and histidine 119. Residues 138 to 142, aspartate 171, glycine 184, and asparagine 283 contribute to the substrate site; that span reads LVSGG. Aspartate 311 serves as a coordination point for Fe cation.

Belongs to the KAE1 / TsaD family. The cofactor is Fe(2+).

Its subcellular location is the cytoplasm. It catalyses the reaction L-threonylcarbamoyladenylate + adenosine(37) in tRNA = N(6)-L-threonylcarbamoyladenosine(37) in tRNA + AMP + H(+). In terms of biological role, required for the formation of a threonylcarbamoyl group on adenosine at position 37 (t(6)A37) in tRNAs that read codons beginning with adenine. Is involved in the transfer of the threonylcarbamoyl moiety of threonylcarbamoyl-AMP (TC-AMP) to the N6 group of A37, together with TsaE and TsaB. TsaD likely plays a direct catalytic role in this reaction. This chain is tRNA N6-adenosine threonylcarbamoyltransferase, found in Prochlorococcus marinus (strain SARG / CCMP1375 / SS120).